Reading from the N-terminus, the 66-residue chain is Pteroicidin-alpha (66 aa).

Residues 1-22 form the signal peptide; the sequence is MKCIALFLVLSMVVLMAEPGEA. R43 carries the arginine amide; partial modification. A propeptide spanning residues 44 to 66 is cleaved from the precursor; the sequence is GKNRDMAEQQELERAFDRERAFA.

It belongs to the pleurocidin family. Post-translationally, this peptide exists in N-terminally amidated and non-amidated forms. The amidated form is more active and has a greater alpha-helix content than the non-amidated form. Expressed in gill, skin, intestine, spleen, anterior kidney, and blood cells.

It localises to the secreted. The amidated peptide is bactericidal on human pathogens like S.aureus or E.coli, as well as on the fish pathogen A.salmonicida. May also be active against a variety of fungi. It can kill bacteria in less than 30 minutes (S.aureus) and 120 minutes (V.vulnificus). It induces hemolysis of erythrocytes from human and fishes (sea bass and lesser-spotted dogfish). Its function is as follows. The non-amidated peptide only inhibits growth of human pathogens like S.aureus or E.coli, and the fish pathogen A.salmonicida. Induces hemolysis of erythrocytes from human and fishes (sea bass and lesser-spotted dogfish). The protein is Pteroicidin-alpha of Pterois volitans (Red lionfish).